Consider the following 448-residue polypeptide: MLHRYLPMTEEDKQQMLQTIGVQSIDELFSDIPESVRFQGEYNIKPAKSEPELMKELMALAAKNADMKTHTSFLGAGVYDHYIPTIVDHVISRSEFYTAYTPYQPEISQGELQAIFEFQTMICELTGMDVANSSMYDGGTALAEAALLSAAHTKKKKVLLSNAVHPEYRDVVKTYAKGPGLEVVEIPYKNGVTDLAALQAEMNEDVACVIVQYPNFFGQIEPLKDIEPIAHAHKGMFVVASNPLALGVLTPPGQFGADIVVGDAQPFGIPAQFGGPHCGYFAVKSALMRKIPGRLVGQTTDEEGRRGFVLTLQAREQHIRRDKATSNICSNQALNALAASVAMTALGKNGVKEMATMNIQKAHYAKEAFVSRGFHVVFEGPFFNEFVIRMNKPIAEVNKKLLEKGIIGGYDLGRNYPELQNCMLIAVTELRTKEEIDTLVKELGDYNA.

This sequence belongs to the GcvP family. N-terminal subunit subfamily. As to quaternary structure, the glycine cleavage system is composed of four proteins: P, T, L and H. In this organism, the P 'protein' is a heterodimer of two subunits.

The catalysed reaction is N(6)-[(R)-lipoyl]-L-lysyl-[glycine-cleavage complex H protein] + glycine + H(+) = N(6)-[(R)-S(8)-aminomethyldihydrolipoyl]-L-lysyl-[glycine-cleavage complex H protein] + CO2. Its function is as follows. The glycine cleavage system catalyzes the degradation of glycine. The P protein binds the alpha-amino group of glycine through its pyridoxal phosphate cofactor; CO(2) is released and the remaining methylamine moiety is then transferred to the lipoamide cofactor of the H protein. This Anoxybacillus flavithermus (strain DSM 21510 / WK1) protein is Probable glycine dehydrogenase (decarboxylating) subunit 1.